The following is a 204-amino-acid chain: Putative AgrB-like protein (204 aa).

4 consecutive transmembrane segments (helical) span residues 40–60 (IILI…ATGL), 87–107 (LNCT…FQNI), 111–131 (NWIV…FAPA), and 156–176 (LILT…LIMV).

It belongs to the AgrB family.

The protein resides in the cell membrane. May be involved in the proteolytic processing of a quorum sensing system signal molecule precursor. This is Putative AgrB-like protein from Listeria welshimeri serovar 6b (strain ATCC 35897 / DSM 20650 / CCUG 15529 / CIP 8149 / NCTC 11857 / SLCC 5334 / V8).